The chain runs to 561 residues: Dihydroxy-acid dehydratase (561 aa).

Cys-51 is a [2Fe-2S] cluster binding site. Asp-83 provides a ligand contact to Mg(2+). Cys-124 contributes to the [2Fe-2S] cluster binding site. Residues Asp-125 and Lys-126 each coordinate Mg(2+). The residue at position 126 (Lys-126) is an N6-carboxylysine. Cys-196 provides a ligand contact to [2Fe-2S] cluster. Position 448 (Glu-448) interacts with Mg(2+). The active-site Proton acceptor is the Ser-474.

This sequence belongs to the IlvD/Edd family. Homodimer. [2Fe-2S] cluster serves as cofactor. Requires Mg(2+) as cofactor.

It catalyses the reaction (2R)-2,3-dihydroxy-3-methylbutanoate = 3-methyl-2-oxobutanoate + H2O. It carries out the reaction (2R,3R)-2,3-dihydroxy-3-methylpentanoate = (S)-3-methyl-2-oxopentanoate + H2O. It participates in amino-acid biosynthesis; L-isoleucine biosynthesis; L-isoleucine from 2-oxobutanoate: step 3/4. The protein operates within amino-acid biosynthesis; L-valine biosynthesis; L-valine from pyruvate: step 3/4. Functionally, functions in the biosynthesis of branched-chain amino acids. Catalyzes the dehydration of (2R,3R)-2,3-dihydroxy-3-methylpentanoate (2,3-dihydroxy-3-methylvalerate) into 2-oxo-3-methylpentanoate (2-oxo-3-methylvalerate) and of (2R)-2,3-dihydroxy-3-methylbutanoate (2,3-dihydroxyisovalerate) into 2-oxo-3-methylbutanoate (2-oxoisovalerate), the penultimate precursor to L-isoleucine and L-valine, respectively. In Pyrobaculum neutrophilum (strain DSM 2338 / JCM 9278 / NBRC 100436 / V24Sta) (Thermoproteus neutrophilus), this protein is Dihydroxy-acid dehydratase.